Consider the following 178-residue polypeptide: ATP-dependent protease subunit HslV (178 aa).

Residue threonine 7 is part of the active site. Residues glycine 162, cysteine 165, and threonine 168 each coordinate Na(+).

Belongs to the peptidase T1B family. HslV subfamily. A double ring-shaped homohexamer of HslV is capped on each side by a ring-shaped HslU homohexamer. The assembly of the HslU/HslV complex is dependent on binding of ATP.

It localises to the cytoplasm. It carries out the reaction ATP-dependent cleavage of peptide bonds with broad specificity.. Allosterically activated by HslU binding. Its function is as follows. Protease subunit of a proteasome-like degradation complex believed to be a general protein degrading machinery. This is ATP-dependent protease subunit HslV from Cupriavidus necator (strain ATCC 17699 / DSM 428 / KCTC 22496 / NCIMB 10442 / H16 / Stanier 337) (Ralstonia eutropha).